The following is a 369-amino-acid chain: Anhydro-N-acetylmuramic acid kinase (369 aa).

Residue 12-19 (GTSLDGVD) participates in ATP binding.

This sequence belongs to the anhydro-N-acetylmuramic acid kinase family.

It carries out the reaction 1,6-anhydro-N-acetyl-beta-muramate + ATP + H2O = N-acetyl-D-muramate 6-phosphate + ADP + H(+). It functions in the pathway amino-sugar metabolism; 1,6-anhydro-N-acetylmuramate degradation. It participates in cell wall biogenesis; peptidoglycan recycling. Its function is as follows. Catalyzes the specific phosphorylation of 1,6-anhydro-N-acetylmuramic acid (anhMurNAc) with the simultaneous cleavage of the 1,6-anhydro ring, generating MurNAc-6-P. Is required for the utilization of anhMurNAc either imported from the medium or derived from its own cell wall murein, and thus plays a role in cell wall recycling. This is Anhydro-N-acetylmuramic acid kinase from Escherichia coli O139:H28 (strain E24377A / ETEC).